Here is a 491-residue protein sequence, read N- to C-terminus: Mitochondrial distribution and morphology protein 12 (491 aa).

In terms of domain architecture, SMP-LTD spans 1–491 (MSIDLNWEAA…VFPSYWTFLV (491 aa)). Over residues 72 to 82 (ESDSSEDEDGE) the composition is skewed to acidic residues. 3 disordered regions span residues 72–123 (ESDS…NHHD), 201–313 (GWPD…MRER), and 389–434 (GDED…QPRR). Basic and acidic residues-rich tracts occupy residues 83-123 (GHDA…NHHD) and 213-229 (MTDH…HNKN). Residues 230 to 249 (ETGSPSRPSTAHTNPTQLSH) are compositionally biased toward polar residues. Positions 252 to 262 (SAASSSNNTSN) are enriched in low complexity. A compositionally biased stretch (polar residues) spans 270-279 (DHTSSTTATT). Over residues 400-421 (STANTTTAASGSSTDNNNNNNE) the composition is skewed to low complexity.

This sequence belongs to the MDM12 family. In terms of assembly, component of the ER-mitochondria encounter structure (ERMES) or MDM complex, composed of mmm1, mdm10, mdm12 and mdm34. A mmm1 homodimer associates with one molecule of mdm12 on each side in a pairwise head-to-tail manner, and the SMP-LTD domains of mmm1 and mdm12 generate a continuous hydrophobic tunnel for phospholipid trafficking.

It is found in the mitochondrion outer membrane. It localises to the endoplasmic reticulum membrane. Component of the ERMES/MDM complex, which serves as a molecular tether to connect the endoplasmic reticulum (ER) and mitochondria. Components of this complex are involved in the control of mitochondrial shape and protein biogenesis, and function in nonvesicular lipid trafficking between the ER and mitochondria. Mdm12 is required for the interaction of the ER-resident membrane protein mmm1 and the outer mitochondrial membrane-resident beta-barrel protein mdm10. The mdm12-mmm1 subcomplex functions in the major beta-barrel assembly pathway that is responsible for biogenesis of all mitochondrial outer membrane beta-barrel proteins, and acts in a late step after the SAM complex. The mdm10-mdm12-mmm1 subcomplex further acts in the TOM40-specific pathway after the action of the mdm12-mmm1 complex. Essential for establishing and maintaining the structure of mitochondria and maintenance of mtDNA nucleoids. The chain is Mitochondrial distribution and morphology protein 12 from Talaromyces stipitatus (strain ATCC 10500 / CBS 375.48 / QM 6759 / NRRL 1006) (Penicillium stipitatum).